The chain runs to 63 residues: Beta-insect depressant toxin Im-3 (63 aa).

Positions 1–63 (KEGYGVGKDG…KVWESSTNTC (63 aa)) constitute an LCN-type CS-alpha/beta domain. 4 disulfides stabilise this stretch: cysteine 11/cysteine 63, cysteine 15/cysteine 37, cysteine 22/cysteine 44, and cysteine 26/cysteine 46.

It belongs to the long (4 C-C) scorpion toxin superfamily. Sodium channel inhibitor family. Beta subfamily. In terms of tissue distribution, expressed by the venom gland.

The protein localises to the secreted. Its function is as follows. Beta toxins bind voltage-independently at site-4 of sodium channels (Nav) and shift the voltage of activation toward more negative potentials thereby affecting sodium channel activation and promoting spontaneous and repetitive firing. Induces paralysis in cricket A.domestica but does not induce death. This is Beta-insect depressant toxin Im-3 from Isometrus maculatus (Lesser brown scorpion).